Reading from the N-terminus, the 697-residue chain is DNA ligase (697 aa).

Residues 34–38, 83–84, and E114 contribute to the NAD(+) site; these read DKTYD and SL. The active-site N6-AMP-lysine intermediate is K116. NAD(+) is bound by residues R137, E171, K315, and K339. The Zn(2+) site is built by C430, C433, C448, and C453. The BRCT domain occupies 616–697; the sequence is KKSSKLNNLN…FHNLLKEENA (82 aa).

This sequence belongs to the NAD-dependent DNA ligase family. LigA subfamily. Mg(2+) serves as cofactor. The cofactor is Mn(2+).

The enzyme catalyses NAD(+) + (deoxyribonucleotide)n-3'-hydroxyl + 5'-phospho-(deoxyribonucleotide)m = (deoxyribonucleotide)n+m + AMP + beta-nicotinamide D-nucleotide.. Its function is as follows. DNA ligase that catalyzes the formation of phosphodiester linkages between 5'-phosphoryl and 3'-hydroxyl groups in double-stranded DNA using NAD as a coenzyme and as the energy source for the reaction. It is essential for DNA replication and repair of damaged DNA. The chain is DNA ligase from Mycoplasmopsis synoviae (strain 53) (Mycoplasma synoviae).